The sequence spans 122 residues: Large ribosomal subunit protein uL14 (122 aa).

The protein belongs to the universal ribosomal protein uL14 family. In terms of assembly, part of the 50S ribosomal subunit. Forms a cluster with proteins L3 and L19. In the 70S ribosome, L14 and L19 interact and together make contacts with the 16S rRNA in bridges B5 and B8.

In terms of biological role, binds to 23S rRNA. Forms part of two intersubunit bridges in the 70S ribosome. The polypeptide is Large ribosomal subunit protein uL14 (Bacillus velezensis (strain DSM 23117 / BGSC 10A6 / LMG 26770 / FZB42) (Bacillus amyloliquefaciens subsp. plantarum)).